Consider the following 1829-residue polypeptide: Afadin (1829 aa).

The Ras-associating 1 domain maps to 39-133; sequence FHGVMRFYFQ…GRFVLKNEND (95 aa). Positions 129–196 are disordered; that stretch reads KNENDAIPAK…PSQGDDSENS (68 aa). Residues 146 to 186 are a coiled coil; the sequence is EKQEKEGVIQNFKRTLSKKEKKEKKKREKEALRQASDKEER. Positions 160–172 are enriched in basic residues; it reads TLSKKEKKEKKKR. The span at 173–189 shows a compositional bias: basic and acidic residues; the sequence is EKEALRQASDKEERPSQ. Ser216, Ser246, and Ser256 each carry phosphoserine. The 103-residue stretch at 246–348 folds into the Ras-associating 2 domain; that stretch reads SGGTLRIYAD…LVFQLKRRPP (103 aa). Positions 356 to 371 are enriched in basic and acidic residues; the sequence is KKHVEGKPLKGKDRAD. The tract at residues 356–377 is disordered; the sequence is KKHVEGKPLKGKDRADGSGYGS. Phosphoserine occurs at positions 391 and 424. The FHA domain maps to 441-507; the sequence is FGPGIQPHHC…KFVDPIQDHV (67 aa). Residues Ser512, Ser557, Ser562, Ser589, and Ser655 each carry the phosphoserine modification. Residues 539–595 are disordered; sequence DIHSGTALPASRSTTRLDSDRVSSASSTAERGMVKPMIRLDQEQDYRRRESRTQDAA. Residues 576–591 are compositionally biased toward basic and acidic residues; the sequence is IRLDQEQDYRRRESRT. The region spanning 668-915 is the Dilute domain; sequence NKMVSMMEGV…IENVVAVAEN (248 aa). The 87-residue stretch at 1014–1100 folds into the PDZ domain; it reads VITVTLKKQN…VVTLEVAKQG (87 aa). A phosphoserine mark is found at Ser1090, Ser1114, Ser1133, Ser1147, Ser1150, Ser1179, Ser1180, Ser1189, and Ser1206. The tract at residues 1114 to 1230 is disordered; that stretch reads SPMMQRISDR…PRPEAYPIPT (117 aa). The span at 1120 to 1135 shows a compositional bias: basic and acidic residues; sequence ISDRRGSGKPRPKSEG. Over residues 1139–1150 the composition is skewed to polar residues; that stretch reads YNNSAQNGSPES. Basic and acidic residues predominate over residues 1159–1179; the sequence is SEPKKLPGDDRLMKNRADHRS. Residues 1195–1217 show a composition bias toward polar residues; it reads PYTSGTAAKITSVSTGNLCTEEQ. Residues Thr1218 and Thr1239 each carry the phosphothreonine modification. Phosphoserine is present on residues Ser1245 and Ser1282. The segment covering 1300-1309 has biased composition (basic and acidic residues); that stretch reads ESGMDRKCDS. Disordered stretches follow at residues 1300-1533 and 1574-1724; these read ESGM…EKQQ and RLQE…KTQV. Over residues 1316 to 1325 the composition is skewed to low complexity; the sequence is SSSVESSTSS. A compositionally biased stretch (polar residues) spans 1332-1344; it reads SSKSVTPASTLTK. A Phosphoserine modification is found at Ser1335. A Phosphothreonine modification is found at Thr1337. Pro residues predominate over residues 1371-1380; sequence LPPPPPPPPA. Over residues 1401–1412 the composition is skewed to low complexity; the sequence is NQAAPQSAQVAA. Residues 1413–1447 are compositionally biased toward basic and acidic residues; it reads AERKKREEHQRWYEKEKARLEEERERKRREQERKL. A coiled-coil region spans residues 1417–1454; sequence KREEHQRWYEKEKARLEEERERKRREQERKLGQMRTQS. A compositionally biased stretch (polar residues) spans 1450-1464; sequence MRTQSLNPASFSPLA. Basic and acidic residues predominate over residues 1494–1510; the sequence is TIERRDLQYITISKEEL. Ser1506 and Ser1517 each carry phosphoserine. The segment covering 1520 to 1533 has biased composition (basic and acidic residues); it reads PWKRDAREKLEKQQ. Residues 1530–1564 adopt a coiled-coil conformation; it reads EKQQQMHIVDMLSKEIHELQNKGDRTAEESDRLRK. Acidic residues predominate over residues 1583 to 1594; that stretch reads EDDDEEEDDDVD. Residues 1600 to 1672 adopt a coiled-coil conformation; sequence QRLEAERRAR…SRLEAERRRQ (73 aa). A compositionally biased stretch (basic and acidic residues) spans 1602-1682; it reads LEAERRARLQ…HEEAARRLLE (81 aa). Residue Ser1701 is modified to Phosphoserine. Residues 1715 to 1724 are compositionally biased toward polar residues; the sequence is RNASYLKTQV. Ser1726 is modified (phosphoserine). The interval 1742-1829 is disordered; sequence DEEENYVPAG…TELENELNTK (88 aa). Residues 1753–1764 are compositionally biased toward polar residues; it reads NSYSGSAGTTAG. Over residues 1768-1781 the composition is skewed to basic and acidic residues; the sequence is APRDTREKLSRSQD. Residues Ser1779 and Ser1804 each carry the phosphoserine modification. Over residues 1809-1829 the composition is skewed to basic and acidic residues; it reads VSDKVKASRKLTELENELNTK. An N6-acetyllysine modification is found at Lys1812.

As to quaternary structure, homodimer. Interacts with F-actin, nectin and NECTIN3. Essential for the association of nectin and E-cadherin. Isoform 2/s-afadin does not interact with F-actin. Interacts with ZO-1 and occludin, but probably in an indirect manner. Interacts with RIT1, RIT2, NRXN1 and BCR. Interacts with ADAM10; the interaction locks ADAM10 at adherens junctions following ADAM10 recruitment to adherens junctions by TSPAN33. In terms of tissue distribution, isoform 1 is widely expressed, including in heart, brain, spleen, lung, liver, skeletal muscle, kidney and testis. Isoform 2 is mainly expressed in the brain.

The protein localises to the cell junction. It localises to the adherens junction. In terms of biological role, belongs to an adhesion system, probably together with the E-cadherin-catenin system, which plays a role in the organization of homotypic, interneuronal and heterotypic cell-cell adherens junctions (AJs). Nectin- and actin-filament-binding protein that connects nectin to the actin cytoskeleton. May play a key role in the organization of epithelial structures of the embryonic ectoderm. Essential for the organization of adherens junctions. The polypeptide is Afadin (Rattus norvegicus (Rat)).